The sequence spans 439 residues: MKLGSKQVKIISLLLLDTVFFGIEITTGYLSHSLALIADSFHMLNDIISLVVALWAVNVAKNRNPDSTYTYGWKRAEILGALINAVFLIALCVSILIEALQRIIAPPVIENPKFVLYVGVAGLISNTVGLFLFHDNDQEHGHGHGHSHGGIFADHEMHMPSSHTHTHAHVDGIENTTPMDSTDNISEIMPNAIVDSFMNENTRLLTPENASKTPSYSTSSHTIASGGNYTEHNKRKRSLNMHGVFLHVLGDALGNIGVMLSAFFIWKTDYSWKYYTDPLVSLIITGIIFSSALPLSCKASKILLQATPSTLSGDQVEGDLLKIPGIIAIHDFHIWNLTESIFIASLHIQLDISPEQFTDLAKIVRSKLHRYGIHSATLQPEFITREVTSTERAGDSQGDHLQNDPLSLRPKTYGTGISGSTCLIDDAANCNTADCLEDH.

Residues 1–9 are Cytoplasmic-facing; it reads MKLGSKQVK. The helical transmembrane segment at 10–30 threads the bilayer; the sequence is IISLLLLDTVFFGIEITTGYL. The Vacuolar segment spans residues 31–33; it reads SHS. A helical transmembrane segment spans residues 34-54; sequence LALIADSFHMLNDIISLVVAL. The Cytoplasmic segment spans residues 55–76; that stretch reads WAVNVAKNRNPDSTYTYGWKRA. Residues 77–97 traverse the membrane as a helical segment; it reads EILGALINAVFLIALCVSILI. Over 98-113 the chain is Vacuolar; that stretch reads EALQRIIAPPVIENPK. A helical transmembrane segment spans residues 114 to 134; that stretch reads FVLYVGVAGLISNTVGLFLFH. Over 135 to 244 the chain is Cytoplasmic; the sequence is DNDQEHGHGH…RKRSLNMHGV (110 aa). 3 consecutive short sequence motifs (histidine repeat) follow at residues 140 to 144, 165 to 169, and 219 to 223; these read HGHGH, HTHAH, and SSHTI. Residues 207–230 show a composition bias toward polar residues; it reads PENASKTPSYSTSSHTIASGGNYT. The disordered stretch occupies residues 207 to 231; it reads PENASKTPSYSTSSHTIASGGNYTE. S225 carries the phosphoserine modification. Residues 245–265 traverse the membrane as a helical segment; it reads FLHVLGDALGNIGVMLSAFFI. Residues 266–274 are Vacuolar-facing; that stretch reads WKTDYSWKY. The helical transmembrane segment at 275–295 threads the bilayer; the sequence is YTDPLVSLIITGIIFSSALPL. The Cytoplasmic segment spans residues 296–439; it reads SCKASKILLQ…CNTADCLEDH (144 aa). K301 participates in a covalent cross-link: Glycyl lysine isopeptide (Lys-Gly) (interchain with G-Cter in ubiquitin). Residues 388–402 show a composition bias toward basic and acidic residues; the sequence is TSTERAGDSQGDHLQ. A disordered region spans residues 388–408; the sequence is TSTERAGDSQGDHLQNDPLSL.

The protein belongs to the cation diffusion facilitator (CDF) transporter (TC 2.A.4) family. SLC30A subfamily.

The protein resides in the vacuole membrane. The catalysed reaction is Zn(2+)(in) = Zn(2+)(out). In terms of biological role, vacuolar transporter that regulates zinc homeostasis by mediating zinc transport and storage into the vacuole. Plays a role in resistance to zinc shock resulting from sudden influx of zinc into cytoplasm. May also participate in the regulation of cobalt levels under normal physiological conditions and may be important in the supply of metal that is required for metalloenzyme or cofactor synthesis. Involved in the resistance to cobalt and rhodium ions. The sequence is that of Vacuolar zinc transporter COT1 from Saccharomyces cerevisiae (strain ATCC 204508 / S288c) (Baker's yeast).